The chain runs to 132 residues: Small ribosomal subunit protein uS8 (132 aa).

This sequence belongs to the universal ribosomal protein uS8 family. Part of the 30S ribosomal subunit. Contacts proteins S5 and S12.

Its function is as follows. One of the primary rRNA binding proteins, it binds directly to 16S rRNA central domain where it helps coordinate assembly of the platform of the 30S subunit. This Mycobacterium leprae (strain Br4923) protein is Small ribosomal subunit protein uS8.